A 511-amino-acid polypeptide reads, in one-letter code: GATA zinc finger domain-containing protein 15 (511 aa).

Residues 1-111 (TNNNNFNNIN…FNDNCNNNSN (111 aa)) are compositionally biased toward low complexity. Disordered stretches follow at residues 1 to 194 (TNNN…NTFF), 214 to 313 (NVNN…NENK), and 325 to 355 (NLQY…VLSP). The segment covering 124–135 (SLQNINQYPLSP) has biased composition (polar residues). Positions 136-166 (NNNKSSNQHLSHSSSNVNSQYYQTPYYQPSQ) are enriched in low complexity. Positions 167–185 (KQNSPNSTPPLNGCQYENH) are enriched in polar residues. Low complexity-rich tracts occupy residues 214–309 (NVNN…NNDN) and 337–351 (SGST…PTSP). The GATA-type zinc-finger motif lies at 453–478 (CQACGTRASPEWRKGPDGFKSLCNAC).

This Dictyostelium discoideum (Social amoeba) protein is GATA zinc finger domain-containing protein 15 (gtaO).